The following is a 431-amino-acid chain: 23S rRNA (uracil(1939)-C(5))-methyltransferase RlmD (431 aa).

The 59-residue stretch at 10–68 folds into the TRAM domain; the sequence is RVTTRQIITVKVNDLDSFGQGVARHNGKALFIPGLLPEESAEVIITEDKKQFARARVSR. The [4Fe-4S] cluster site is built by Cys81, Cys87, Cys90, and Cys161. Positions 264, 293, 298, 314, 341, and 362 each coordinate S-adenosyl-L-methionine. The active-site Nucleophile is Cys388.

This sequence belongs to the class I-like SAM-binding methyltransferase superfamily. RNA M5U methyltransferase family. RlmD subfamily.

The enzyme catalyses uridine(1939) in 23S rRNA + S-adenosyl-L-methionine = 5-methyluridine(1939) in 23S rRNA + S-adenosyl-L-homocysteine + H(+). Its function is as follows. Catalyzes the formation of 5-methyl-uridine at position 1939 (m5U1939) in 23S rRNA. The chain is 23S rRNA (uracil(1939)-C(5))-methyltransferase RlmD from Salmonella choleraesuis (strain SC-B67).